The following is a 357-amino-acid chain: Isopentenyl-diphosphate delta-isomerase (357 aa).

Residue 13–14 (RK) coordinates substrate. FMN contacts are provided by residues Ser-71, 72-74 (SMT), Ser-102, and Asn-131. Substrate is bound at residue 102–104 (SMR). Gln-166 contributes to the substrate binding site. Mg(2+) is bound at residue Glu-167. FMN is bound by residues Lys-198 and 311–312 (AR).

This sequence belongs to the IPP isomerase type 2 family. In terms of assembly, homooctamer. Dimer of tetramers. Requires FMN as cofactor. The cofactor is NADPH. Mg(2+) serves as cofactor.

The protein localises to the cytoplasm. It carries out the reaction isopentenyl diphosphate = dimethylallyl diphosphate. In terms of biological role, involved in the biosynthesis of isoprenoids. Catalyzes the 1,3-allylic rearrangement of the homoallylic substrate isopentenyl (IPP) to its allylic isomer, dimethylallyl diphosphate (DMAPP). The protein is Isopentenyl-diphosphate delta-isomerase of Chlorobium chlorochromatii (strain CaD3).